A 113-amino-acid polypeptide reads, in one-letter code: Protein translation factor SUI1 homolog 1 (113 aa).

Residues 1–24 (MSELDSQVPTAFDPFADANAEDSG) form a disordered region. At Ser-2 the chain carries N-acetylserine.

The protein belongs to the SUI1 family.

In terms of biological role, probably involved in translation. In Arabidopsis thaliana (Mouse-ear cress), this protein is Protein translation factor SUI1 homolog 1.